A 156-amino-acid polypeptide reads, in one-letter code: Lipoprotein signal peptidase (156 aa).

Transmembrane regions (helical) follow at residues 57–77 (LFLI…LFIN) and 83–103 (ILKI…IDRI). Active-site residues include Asp-110 and Asp-129. The helical transmembrane segment at 124–144 (IFNIADVLVSLGTILLIIFII) threads the bilayer.

This sequence belongs to the peptidase A8 family.

It is found in the cell membrane. It carries out the reaction Release of signal peptides from bacterial membrane prolipoproteins. Hydrolyzes -Xaa-Yaa-Zaa-|-(S,diacylglyceryl)Cys-, in which Xaa is hydrophobic (preferably Leu), and Yaa (Ala or Ser) and Zaa (Gly or Ala) have small, neutral side chains.. It functions in the pathway protein modification; lipoprotein biosynthesis (signal peptide cleavage). This protein specifically catalyzes the removal of signal peptides from prolipoproteins. The polypeptide is Lipoprotein signal peptidase (Clostridium tetani (strain Massachusetts / E88)).